A 327-amino-acid polypeptide reads, in one-letter code: Clavesin-2 (327 aa).

Residues isoleucine 96–aspartate 257 form the CRAL-TRIO domain. Residues aspartate 289–aspartate 327 are disordered.

As to quaternary structure, forms a complex with clathrin heavy chain and gamma-adaptin.

Its subcellular location is the golgi apparatus. The protein resides in the trans-Golgi network membrane. It localises to the early endosome membrane. It is found in the cytoplasmic vesicle. The protein localises to the clathrin-coated vesicle. Functionally, required for normal morphology of late endosomes and/or lysosomes in neurons. Binds phosphatidylinositol 3,5-bisphosphate (PtdIns(3,5)P2). The chain is Clavesin-2 (Clvs2) from Mus musculus (Mouse).